A 248-amino-acid chain; its full sequence is MGNKINPNGFRLGITRGWNSRWYAGKKQYAGLLKEDEKIRKLVDKKLSAAGIARVEIERAGQQVNVIISAAKPGIVIGKGGDSIKQLRADIEKLVSAGTVAVNVAEIPNPNISAPLVALRIAEQIERRFAFRRAMKQAAQRVMESGARGVKVVLSGRLGGAEQARRETVREGRVPLHTLRADIDYGTALARTTYGILGIKVMVFTGEVIGGRTETIARPQRRNDERRPEGGDRANRRRPTARRRAGGE.

Positions 39-108 (IRKLVDKKLS…TVAVNVAEIP (70 aa)) constitute a KH type-2 domain. The interval 214 to 248 (ETIARPQRRNDERRPEGGDRANRRRPTARRRAGGE) is disordered. Over residues 221-234 (RRNDERRPEGGDRA) the composition is skewed to basic and acidic residues. Residues 235–248 (NRRRPTARRRAGGE) show a composition bias toward basic residues.

Belongs to the universal ribosomal protein uS3 family. Part of the 30S ribosomal subunit. Forms a tight complex with proteins S10 and S14.

Binds the lower part of the 30S subunit head. Binds mRNA in the 70S ribosome, positioning it for translation. This is Small ribosomal subunit protein uS3 from Deinococcus deserti (strain DSM 17065 / CIP 109153 / LMG 22923 / VCD115).